A 173-amino-acid polypeptide reads, in one-letter code: Endoribonuclease YbeY (173 aa).

Residues His-120, His-124, and His-130 each contribute to the Zn(2+) site.

This sequence belongs to the endoribonuclease YbeY family. Requires Zn(2+) as cofactor.

Its subcellular location is the cytoplasm. Its function is as follows. Single strand-specific metallo-endoribonuclease involved in late-stage 70S ribosome quality control and in maturation of the 3' terminus of the 16S rRNA. This is Endoribonuclease YbeY from Kineococcus radiotolerans (strain ATCC BAA-149 / DSM 14245 / SRS30216).